Here is a 780-residue protein sequence, read N- to C-terminus: Carboxysome assembly protein CsoS2 (780 aa).

Residues Met-1–Lys-15 show a composition bias toward basic and acidic residues. Disordered stretches follow at residues Met-1–Glu-173, Lys-189–Leu-212, Thr-226–Val-281, Asn-330–Gly-349, and Ser-382–Thr-444. The stretch at Ser-5–Ser-24 is one N-repeat 1 repeat. A compositionally biased stretch (low complexity) spans Ala-48–Ser-78. The stretch at Pro-86–Ala-105 is one N-repeat 2 repeat. Basic and acidic residues predominate over residues Pro-86 to Val-116. The segment covering Ala-117 to Ala-130 has biased composition (low complexity). N-repeat repeat units follow at residues Pro-175 to Ala-194 and Thr-213 to Ser-235. M-repeat repeat units follow at residues Lys-260–Cys-309, Lys-320–Cys-369, Lys-378–Tyr-417, Lys-431–Cys-480, Lys-490–Ala-535, and Thr-541–Cys-599. Residues Lys-260–Asp-608 form a middle region region. Positions Ser-264–Gln-276 are enriched in low complexity. Low complexity-rich tracts occupy residues Gly-387–Gly-403 and Val-432–Thr-444. Positions Ser-609–Asn-749 are C-terminal domain. C-repeat repeat units follow at residues Ser-623–Phe-669 and Glu-693–Ser-726. Disordered regions lie at residues Ala-631–Gly-661 and Ala-686–Gly-780. Residues Val-641–Arg-651 are compositionally biased toward polar residues. Residues Thr-709–Thr-720 are compositionally biased toward basic and acidic residues. The C-terminal peptide stretch occupies residues Glu-750–Gly-780. Over residues Val-759–Lys-768 the composition is skewed to polar residues.

Belongs to the CsoS2 family. Interacts via its N-terminal repeats with RuBisCO. Interacts with the major shell protein CsoS1. Unlike H.neapolitanus and predictions for P.marinus strain MIT 9313, this protein is not thought to have ribosomal frameshifting.

Its function is as follows. Required for alpha-carboxysome (Cb) assembly, mediates interaction between RuBisCO and the carboxysome shell. The protein is probably intrinsically disordered. The C-terminal repeats act as the encapsulation signal to target proteins to the Cb; they are necessary and sufficient to target both CsoS2 and foreign proteins to the Cb. The N-terminal repeats of this protein bind simultaneously to both subunits of RuBisCO. Probably also interacts with the major shell proteins (CsoS1); that interaction would increase the local concentration of CsoS2 so that it can condense RuBisCO and full carboxysomes can be formed. This Parasynechococcus marenigrum (strain WH8102) protein is Carboxysome assembly protein CsoS2.